A 1025-amino-acid chain; its full sequence is Retinoblastoma-related protein (1025 aa).

The disordered stretch occupies residues 1–20; it reads MEDHPPKPSIPTADASLSNH. Residues 422–623 are domain A; that stretch reads TPVTTAMTTA…EKGSSMYNSL (202 aa). Positions 422–875 are pocket; the sequence is TPVTTAMTTA…NEIFIPAVKP (454 aa). Positions 624–744 are spacer; that stretch reads TVARPALSAE…PGAGGETCAE (121 aa). The segment at 745–875 is domain B; the sequence is TAINVFFSKI…NEIFIPAVKP (131 aa).

It belongs to the retinoblastoma protein (RB) family.

The protein localises to the nucleus. In terms of biological role, regulator of biological processes that recruits a histone deacetylase to control gene transcription. May play a role in the entry into mitosis, negatively regulating the cell proliferation. Formation of stable complexes with geminiviridae replication-associated proteins may create a cellular environment which favors viral DNA replication. The chain is Retinoblastoma-related protein (pRB) from Camellia sinensis (Tea plant).